We begin with the raw amino-acid sequence, 208 residues long: Methenyltetrahydrofolate cyclohydrolase (208 aa).

A helical transmembrane segment spans residues 25–46 (GAAAISGAMGAALVSMVCNLTI).

The protein belongs to the cyclodeaminase/cyclohydrolase family. As to quaternary structure, homodimer.

It localises to the membrane. It carries out the reaction (6R)-5,10-methenyltetrahydrofolate + H2O = (6R)-10-formyltetrahydrofolate + H(+). It participates in one-carbon metabolism; formaldehyde assimilation via serine pathway. Its function is as follows. Required for both C1 and C2 metabolism. This Methylorubrum extorquens (strain ATCC 14718 / DSM 1338 / JCM 2805 / NCIMB 9133 / AM1) (Methylobacterium extorquens) protein is Methenyltetrahydrofolate cyclohydrolase (fchA).